The chain runs to 520 residues: Cholesterol side-chain cleavage enzyme, mitochondrial (520 aa).

Residues 1 to 39 (MLARGLPFRSALVKACPPLLNTGREGWGHHRVGTGEGAG) constitute a mitochondrion transit peptide. A disordered region spans residues 27–47 (WGHHRVGTGEGAGISTRTPRP). Cys461 contacts heme.

The protein belongs to the cytochrome P450 family. As to quaternary structure, interacts with FDX1/adrenodoxin. The cofactor is heme.

Its subcellular location is the mitochondrion inner membrane. It catalyses the reaction 6 reduced [adrenodoxin] + cholesterol + 3 O2 + 6 H(+) = 4-methylpentanal + pregnenolone + 6 oxidized [adrenodoxin] + 4 H2O. It carries out the reaction 2 reduced [adrenodoxin] + cholesterol + O2 + 2 H(+) = (22R)-hydroxycholesterol + 2 oxidized [adrenodoxin] + H2O. The catalysed reaction is (22R)-hydroxycholesterol + 2 reduced [adrenodoxin] + O2 + 2 H(+) = (20R,22R)-20,22-dihydroxycholesterol + 2 oxidized [adrenodoxin] + H2O. The enzyme catalyses (20R,22R)-20,22-dihydroxycholesterol + 2 reduced [adrenodoxin] + O2 + 2 H(+) = 4-methylpentanal + pregnenolone + 2 oxidized [adrenodoxin] + 2 H2O. The protein operates within lipid metabolism; C21-steroid hormone metabolism. It participates in steroid metabolism; cholesterol metabolism. A cytochrome P450 monooxygenase that catalyzes the side-chain hydroxylation and cleavage of cholesterol to pregnenolone, the precursor of most steroid hormones. Catalyzes three sequential oxidation reactions of cholesterol, namely the hydroxylation at C22 followed with the hydroxylation at C20 to yield 20R,22R-hydroxycholesterol that is further cleaved between C20 and C22 to yield the C21-steroid pregnenolone and 4-methylpentanal. Mechanistically, uses molecular oxygen inserting one oxygen atom into a substrate and reducing the second into a water molecule. Two electrons are provided by NADPH via a two-protein mitochondrial transfer system comprising flavoprotein FDXR (adrenodoxin/ferredoxin reductase) and nonheme iron-sulfur protein FDX1 or FDX2 (adrenodoxin/ferredoxin). This Ovis aries (Sheep) protein is Cholesterol side-chain cleavage enzyme, mitochondrial.